The following is a 190-amino-acid chain: Large ribosomal subunit protein bL9 (190 aa).

This sequence belongs to the bacterial ribosomal protein bL9 family.

Its function is as follows. Binds to the 23S rRNA. The polypeptide is Large ribosomal subunit protein bL9 (Methylorubrum extorquens (strain CM4 / NCIMB 13688) (Methylobacterium extorquens)).